The primary structure comprises 471 residues: tRNA(Ile)-lysidine synthase (471 aa).

Ser-35–Ser-40 provides a ligand contact to ATP.

Belongs to the tRNA(Ile)-lysidine synthase family.

Its subcellular location is the cytoplasm. The catalysed reaction is cytidine(34) in tRNA(Ile2) + L-lysine + ATP = lysidine(34) in tRNA(Ile2) + AMP + diphosphate + H(+). In terms of biological role, ligates lysine onto the cytidine present at position 34 of the AUA codon-specific tRNA(Ile) that contains the anticodon CAU, in an ATP-dependent manner. Cytidine is converted to lysidine, thus changing the amino acid specificity of the tRNA from methionine to isoleucine. In Geobacter sulfurreducens (strain ATCC 51573 / DSM 12127 / PCA), this protein is tRNA(Ile)-lysidine synthase.